Consider the following 570-residue polypeptide: Alpha-glucosidase (570 aa).

The Nucleophile role is filled by Asp206. Residue Glu263 is the Proton donor of the active site.

This sequence belongs to the glycosyl hydrolase 13 family.

The enzyme catalyses Hydrolysis of terminal, non-reducing (1-&gt;4)-linked alpha-D-glucose residues with release of alpha-D-glucose.. The chain is Alpha-glucosidase (MAL2) from Candida albicans (Yeast).